The primary structure comprises 273 residues: 3-methyl-2-oxobutanoate hydroxymethyltransferase (273 aa).

Mg(2+) is bound by residues D53 and D92. Residues 53–54, D92, and K120 contribute to the 3-methyl-2-oxobutanoate site; that span reads DS. A Mg(2+)-binding site is contributed by E122. E189 serves as the catalytic Proton acceptor.

Belongs to the PanB family. As to quaternary structure, homodecamer; pentamer of dimers. Requires Mg(2+) as cofactor.

Its subcellular location is the cytoplasm. The enzyme catalyses 3-methyl-2-oxobutanoate + (6R)-5,10-methylene-5,6,7,8-tetrahydrofolate + H2O = 2-dehydropantoate + (6S)-5,6,7,8-tetrahydrofolate. The protein operates within cofactor biosynthesis; (R)-pantothenate biosynthesis; (R)-pantoate from 3-methyl-2-oxobutanoate: step 1/2. Catalyzes the reversible reaction in which hydroxymethyl group from 5,10-methylenetetrahydrofolate is transferred onto alpha-ketoisovalerate to form ketopantoate. The sequence is that of 3-methyl-2-oxobutanoate hydroxymethyltransferase from Cupriavidus pinatubonensis (strain JMP 134 / LMG 1197) (Cupriavidus necator (strain JMP 134)).